A 293-amino-acid chain; its full sequence is Ribosomal protein L11 methyltransferase (293 aa).

Residues Thr-145, Gly-166, Asp-188, and Asn-230 each contribute to the S-adenosyl-L-methionine site.

It belongs to the methyltransferase superfamily. PrmA family.

It localises to the cytoplasm. It carries out the reaction L-lysyl-[protein] + 3 S-adenosyl-L-methionine = N(6),N(6),N(6)-trimethyl-L-lysyl-[protein] + 3 S-adenosyl-L-homocysteine + 3 H(+). Functionally, methylates ribosomal protein L11. This is Ribosomal protein L11 methyltransferase from Actinobacillus pleuropneumoniae serotype 5b (strain L20).